Here is a 253-residue protein sequence, read N- to C-terminus: Indole-3-glycerol phosphate synthase (253 aa).

This sequence belongs to the TrpC family.

It catalyses the reaction 1-(2-carboxyphenylamino)-1-deoxy-D-ribulose 5-phosphate + H(+) = (1S,2R)-1-C-(indol-3-yl)glycerol 3-phosphate + CO2 + H2O. Its pathway is amino-acid biosynthesis; L-tryptophan biosynthesis; L-tryptophan from chorismate: step 4/5. This chain is Indole-3-glycerol phosphate synthase, found in Bacillus cereus (strain ATCC 14579 / DSM 31 / CCUG 7414 / JCM 2152 / NBRC 15305 / NCIMB 9373 / NCTC 2599 / NRRL B-3711).